A 214-amino-acid chain; its full sequence is Ribonuclease HII (214 aa).

One can recognise an RNase H type-2 domain in the interval 26–214 (EIVCGVDEAG…PVREAFDLIR (189 aa)). Residues Asp-32, Glu-33, and Asp-124 each contribute to the a divalent metal cation site.

Belongs to the RNase HII family. Requires Mn(2+) as cofactor. Mg(2+) is required as a cofactor.

Its subcellular location is the cytoplasm. It catalyses the reaction Endonucleolytic cleavage to 5'-phosphomonoester.. Its function is as follows. Endonuclease that specifically degrades the RNA of RNA-DNA hybrids. This Burkholderia pseudomallei (strain 1710b) protein is Ribonuclease HII.